We begin with the raw amino-acid sequence, 428 residues long: Trigger factor (428 aa).

Positions Gly-163 to Pro-248 constitute a PPIase FKBP-type domain.

The protein belongs to the FKBP-type PPIase family. Tig subfamily.

Its subcellular location is the cytoplasm. The catalysed reaction is [protein]-peptidylproline (omega=180) = [protein]-peptidylproline (omega=0). Functionally, involved in protein export. Acts as a chaperone by maintaining the newly synthesized protein in an open conformation. Functions as a peptidyl-prolyl cis-trans isomerase. This chain is Trigger factor, found in Anoxybacillus flavithermus (strain DSM 21510 / WK1).